A 246-amino-acid chain; its full sequence is 1-(5-phosphoribosyl)-5-[(5-phosphoribosylamino)methylideneamino] imidazole-4-carboxamide isomerase (246 aa).

Aspartate 7 acts as the Proton acceptor in catalysis. The active-site Proton donor is aspartate 129.

The protein belongs to the HisA/HisF family.

It is found in the cytoplasm. The catalysed reaction is 1-(5-phospho-beta-D-ribosyl)-5-[(5-phospho-beta-D-ribosylamino)methylideneamino]imidazole-4-carboxamide = 5-[(5-phospho-1-deoxy-D-ribulos-1-ylimino)methylamino]-1-(5-phospho-beta-D-ribosyl)imidazole-4-carboxamide. It participates in amino-acid biosynthesis; L-histidine biosynthesis; L-histidine from 5-phospho-alpha-D-ribose 1-diphosphate: step 4/9. The polypeptide is 1-(5-phosphoribosyl)-5-[(5-phosphoribosylamino)methylideneamino] imidazole-4-carboxamide isomerase (Buchnera aphidicola subsp. Acyrthosiphon pisum (strain Tuc7)).